The chain runs to 344 residues: Photosystem II protein D1 (344 aa).

Thr-2 bears the N-acetylthreonine mark. Phosphothreonine is present on Thr-2. 3 helical membrane-spanning segments follow: residues 29–46, 118–133, and 142–156; these read YIGWFGCLMIPTLLTATS, HFFLGICAYMGREWEL, and WIAVAYSAPVAAATA. Chlorophyll a is bound at residue His-118. Pheophytin a is bound at residue Tyr-126. [CaMn4O5] cluster is bound by residues Asp-170 and Glu-189. A helical transmembrane segment spans residues 197-218; sequence FHMLGVAGVFGGSLFSAMHGSL. Residue His-198 coordinates chlorophyll a. Residues His-215 and 264 to 265 each bind a quinone; that span reads SF. His-215 provides a ligand contact to Fe cation. His-272 provides a ligand contact to Fe cation. Residues 274–288 form a helical membrane-spanning segment; it reads FLAAWPVIGIWFTAL. His-332, Glu-333, Asp-342, and Ala-344 together coordinate [CaMn4O5] cluster.

It belongs to the reaction center PufL/M/PsbA/D family. PSII is composed of 1 copy each of membrane proteins PsbA, PsbB, PsbC, PsbD, PsbE, PsbF, PsbH, PsbI, PsbJ, PsbK, PsbL, PsbM, PsbT, PsbX, PsbY, PsbZ, Psb30/Ycf12, at least 3 peripheral proteins of the oxygen-evolving complex and a large number of cofactors. It forms dimeric complexes. Requires The D1/D2 heterodimer binds P680, chlorophylls that are the primary electron donor of PSII, and subsequent electron acceptors. It shares a non-heme iron and each subunit binds pheophytin, quinone, additional chlorophylls, carotenoids and lipids. D1 provides most of the ligands for the Mn4-Ca-O5 cluster of the oxygen-evolving complex (OEC). There is also a Cl(-1) ion associated with D1 and D2, which is required for oxygen evolution. The PSII complex binds additional chlorophylls, carotenoids and specific lipids. as cofactor. In terms of processing, tyr-161 forms a radical intermediate that is referred to as redox-active TyrZ, YZ or Y-Z.

It is found in the plastid. It localises to the chloroplast thylakoid membrane. It catalyses the reaction 2 a plastoquinone + 4 hnu + 2 H2O = 2 a plastoquinol + O2. In terms of biological role, photosystem II (PSII) is a light-driven water:plastoquinone oxidoreductase that uses light energy to abstract electrons from H(2)O, generating O(2) and a proton gradient subsequently used for ATP formation. It consists of a core antenna complex that captures photons, and an electron transfer chain that converts photonic excitation into a charge separation. The D1/D2 (PsbA/PsbD) reaction center heterodimer binds P680, the primary electron donor of PSII as well as several subsequent electron acceptors. The chain is Photosystem II protein D1 from Pleurastrum terricola (Filamentous green alga).